The primary structure comprises 152 residues: Large ribosomal subunit protein uL11 (152 aa).

Belongs to the universal ribosomal protein uL11 family. Part of the ribosomal stalk of the 50S ribosomal subunit. Interacts with L10 and the large rRNA to form the base of the stalk. L10 forms an elongated spine to which L12 dimers bind in a sequential fashion forming a multimeric L10(L12)X complex. One or more lysine residues are methylated.

Functionally, forms part of the ribosomal stalk which helps the ribosome interact with GTP-bound translation factors. This chain is Large ribosomal subunit protein uL11, found in Mycoplasmoides gallisepticum (strain R(low / passage 15 / clone 2)) (Mycoplasma gallisepticum).